Here is a 510-residue protein sequence, read N- to C-terminus: Maturase K (510 aa).

It belongs to the intron maturase 2 family. MatK subfamily.

The protein localises to the plastid. The protein resides in the chloroplast. Its function is as follows. Usually encoded in the trnK tRNA gene intron. Probably assists in splicing its own and other chloroplast group II introns. This Populus alba (White poplar) protein is Maturase K.